Here is a 284-residue protein sequence, read N- to C-terminus: Nucleotide-binding protein Shal_3708 (284 aa).

8 to 15 (GRSGSGKS) lines the ATP pocket. Residue 56-59 (DIRN) participates in GTP binding.

This sequence belongs to the RapZ-like family.

Functionally, displays ATPase and GTPase activities. The chain is Nucleotide-binding protein Shal_3708 from Shewanella halifaxensis (strain HAW-EB4).